The sequence spans 445 residues: Putative ubiquitin carboxyl-terminal hydrolase L293 (445 aa).

The region spanning 133-441 (KALANFGNSC…SAYIILYGDI (309 aa)) is the USP domain. The active-site Nucleophile is the Cys-142. His-384 functions as the Proton acceptor in the catalytic mechanism.

Belongs to the peptidase C19 family.

Its subcellular location is the virion. The catalysed reaction is Thiol-dependent hydrolysis of ester, thioester, amide, peptide and isopeptide bonds formed by the C-terminal Gly of ubiquitin (a 76-residue protein attached to proteins as an intracellular targeting signal).. This is Putative ubiquitin carboxyl-terminal hydrolase L293 from Acanthamoeba polyphaga mimivirus (APMV).